We begin with the raw amino-acid sequence, 205 residues long: Transcription termination/antitermination protein NusG (205 aa).

Positions 154-178 (GDHIMVLSGPFKDFEGDVIEVSPER) constitute a KOW domain.

Belongs to the NusG family.

In terms of biological role, participates in transcription elongation, termination and antitermination. This chain is Transcription termination/antitermination protein NusG, found in Synechocystis sp. (strain ATCC 27184 / PCC 6803 / Kazusa).